Here is a 283-residue protein sequence, read N- to C-terminus: Protein/nucleic acid deglycase HchA (283 aa).

Zn(2+) contacts are provided by His-86, Glu-91, and His-123. The active-site Nucleophile is Cys-185.

It belongs to the peptidase C56 family. HchA subfamily. In terms of assembly, homodimer.

Its subcellular location is the cytoplasm. It catalyses the reaction N(omega)-(1-hydroxy-2-oxopropyl)-L-arginyl-[protein] + H2O = lactate + L-arginyl-[protein] + H(+). It carries out the reaction N(6)-(1-hydroxy-2-oxopropyl)-L-lysyl-[protein] + H2O = lactate + L-lysyl-[protein] + H(+). The catalysed reaction is S-(1-hydroxy-2-oxopropyl)-L-cysteinyl-[protein] + H2O = lactate + L-cysteinyl-[protein] + H(+). The enzyme catalyses N(omega)-(1-hydroxy-2-oxoethyl)-L-arginyl-[protein] + H2O = L-arginyl-[protein] + glycolate + H(+). It catalyses the reaction N(6)-(1-hydroxy-2-oxoethyl)-L-lysyl-[protein] + H2O = glycolate + L-lysyl-[protein] + H(+). It carries out the reaction S-(1-hydroxy-2-oxoethyl)-L-cysteinyl-[protein] + H2O = glycolate + L-cysteinyl-[protein] + H(+). The catalysed reaction is N(2)-(1-hydroxy-2-oxopropyl)-dGTP + H2O = lactate + dGTP + H(+). The enzyme catalyses N(2)-(1-hydroxy-2-oxopropyl)-GTP + H2O = lactate + GTP + H(+). It catalyses the reaction N(2)-(1-hydroxy-2-oxopropyl)-GDP + H2O = lactate + GDP + H(+). It carries out the reaction N(2)-(1-hydroxy-2-oxopropyl)-GMP + H2O = lactate + GMP + H(+). The catalysed reaction is N(2)-(1-hydroxy-2-oxoethyl)-dGTP + H2O = dGTP + glycolate + H(+). The enzyme catalyses N(2)-(1-hydroxy-2-oxoethyl)-GTP + H2O = glycolate + GTP + H(+). It catalyses the reaction N(2)-(1-hydroxy-2-oxoethyl)-GDP + H2O = glycolate + GDP + H(+). It carries out the reaction N(2)-(1-hydroxy-2-oxoethyl)-GMP + H2O = glycolate + GMP + H(+). The catalysed reaction is an N(2)-(1-hydroxy-2-oxopropyl)-guanosine in RNA + H2O = a guanosine in RNA + lactate + H(+). The enzyme catalyses an N(2)-(1-hydroxy-2-oxopropyl)-2'-deoxyguanosine in DNA + H2O = a 2'-deoxyguanosine in DNA + lactate + H(+). It catalyses the reaction an N(2)-(1-hydroxy-2-oxoethyl)-guanosine in RNA + H2O = a guanosine in RNA + glycolate + H(+). It carries out the reaction an N(2)-(1-hydroxy-2-oxoethyl)-2'-deoxyguanosine in DNA + H2O = a 2'-deoxyguanosine in DNA + glycolate + H(+). Protein and nucleotide deglycase that catalyzes the deglycation of the Maillard adducts formed between amino groups of proteins or nucleotides and reactive carbonyl groups of glyoxals. Thus, functions as a protein deglycase that repairs methylglyoxal- and glyoxal-glycated proteins, and releases repaired proteins and lactate or glycolate, respectively. Deglycates cysteine, arginine and lysine residues in proteins, and thus reactivates these proteins by reversing glycation by glyoxals. Acts on early glycation intermediates (hemithioacetals and aminocarbinols), preventing the formation of Schiff bases and advanced glycation endproducts (AGE). Also functions as a nucleotide deglycase able to repair glycated guanine in the free nucleotide pool (GTP, GDP, GMP, dGTP) and in DNA and RNA. Is thus involved in a major nucleotide repair system named guanine glycation repair (GG repair), dedicated to reversing methylglyoxal and glyoxal damage via nucleotide sanitization and direct nucleic acid repair. Plays an important role in protecting cells from carbonyl stress. This Escherichia coli O157:H7 protein is Protein/nucleic acid deglycase HchA.